The chain runs to 555 residues: Cilia- and flagella-associated protein 184 (555 aa).

Over residues Met-1 to Gly-12 the composition is skewed to basic and acidic residues. The segment at Met-1 to Tyr-202 is disordered. 2 stretches are compositionally biased toward acidic residues: residues Gly-41–Gln-54 and Pro-95–Ala-105. The segment covering Glu-106–Pro-117 has biased composition (low complexity). Positions Glu-118–Gln-131 are enriched in acidic residues. Basic and acidic residues predominate over residues Glu-174–Tyr-202. 2 coiled-coil regions span residues Tyr-305–Gln-441 and Asp-505–His-531.

It belongs to the CFAP184 family. Forms a complex with CFAP263; the interaction is required for functional activity in cilia.

It localises to the cell projection. Its subcellular location is the cilium. It is found in the cytoplasm. The protein resides in the cytoskeleton. The protein localises to the microtubule organizing center. It localises to the centrosome. Functionally, in complex with CFAP263, acts as a regulator of ciliary beating that connects radial spoke 3 (RS3) to the inner dynein arm (IDA) and the nexin-dynein regulatory complex (N-DRC). The complex is positioned parallel to N-DRC and forms a connection between the arch at the base of RS3, the IDA tail and N-DRC. The polypeptide is Cilia- and flagella-associated protein 184 (Homo sapiens (Human)).